Here is a 115-residue protein sequence, read N- to C-terminus: Phosphoribosyl-AMP cyclohydrolase (115 aa).

Asp-80 provides a ligand contact to Mg(2+). Cys-81 provides a ligand contact to Zn(2+). Positions 82 and 84 each coordinate Mg(2+). Zn(2+) is bound by residues Cys-97 and Cys-104.

It belongs to the PRA-CH family. In terms of assembly, homodimer. Mg(2+) serves as cofactor. It depends on Zn(2+) as a cofactor.

Its subcellular location is the cytoplasm. It carries out the reaction 1-(5-phospho-beta-D-ribosyl)-5'-AMP + H2O = 1-(5-phospho-beta-D-ribosyl)-5-[(5-phospho-beta-D-ribosylamino)methylideneamino]imidazole-4-carboxamide. The protein operates within amino-acid biosynthesis; L-histidine biosynthesis; L-histidine from 5-phospho-alpha-D-ribose 1-diphosphate: step 3/9. Functionally, catalyzes the hydrolysis of the adenine ring of phosphoribosyl-AMP. The polypeptide is Phosphoribosyl-AMP cyclohydrolase (Rhodococcus erythropolis (strain PR4 / NBRC 100887)).